The sequence spans 481 residues: Zinc metalloproteinase/disintegrin (481 aa).

Positions 1-20 are cleaved as a signal peptide; it reads MIQVLLVTICLAVFPYQGSS. A propeptide spanning residues 21 to 190 is cleaved from the precursor; it reads IILESGNVDD…KASQLYLTPE (170 aa). The Peptidase M12B domain maps to 197 to 392; that stretch reads RYIKLAIVVD…DNPQCILNAP (196 aa). 3 disulfide bridges follow: cysteine 308–cysteine 387, cysteine 349–cysteine 371, and cysteine 351–cysteine 354. Histidine 333 is a Zn(2+) binding site. Glutamate 334 is an active-site residue. Zn(2+) contacts are provided by histidine 337 and histidine 343. Residues 393–408 constitute a propeptide that is removed on maturation; that stretch reads LRTDTVSTPVSGNEFL. The 82-residue stretch at 400 to 481 folds into the Disintegrin domain; sequence TPVSGNEFLE…GDCPRNPFHA (82 aa). Intrachain disulfides connect cysteine 414–cysteine 429, cysteine 416–cysteine 424, cysteine 423–cysteine 446, cysteine 437–cysteine 443, cysteine 442–cysteine 467, and cysteine 455–cysteine 474. The short motif at 459 to 461 is the Cell attachment site element; sequence RGD.

It belongs to the venom metalloproteinase (M12B) family. P-II subfamily. P-IIa sub-subfamily. As to quaternary structure, monomer. Zn(2+) is required as a cofactor. Expressed by the venom gland.

Its subcellular location is the secreted. Its function is as follows. Impairs hemostasis in the envenomed animal. Functionally, disintegrin elegantin-2a-f: inhibits platelet aggregation induced by ADP, thrombin, platelet-activating factor and collagen. Acts by inhibiting fibrinogen interaction with platelet receptors GPIIb/GPIIIa (ITGA2B/ITGB3). The sequence is that of Zinc metalloproteinase/disintegrin from Protobothrops elegans (Elegant pitviper).